A 508-amino-acid chain; its full sequence is Photosystem II CP47 reaction center protein (508 aa).

6 helical membrane passes run 21-36 (AVHIMHTALVSGWAGS), 101-115 (IVFSGLCFLAAIWHW), 140-156 (GIHLFLAGVACFGFGAF), 203-218 (IAAGTLGILAGLFHLS), 237-252 (VLSSSIAAVFFAAFVV), and 457-472 (TFALLFFFGHIWHGAR).

This sequence belongs to the PsbB/PsbC family. PsbB subfamily. In terms of assembly, PSII is composed of 1 copy each of membrane proteins PsbA, PsbB, PsbC, PsbD, PsbE, PsbF, PsbH, PsbI, PsbJ, PsbK, PsbL, PsbM, PsbT, PsbX, PsbY, PsbZ, Psb30/Ycf12, at least 3 peripheral proteins of the oxygen-evolving complex and a large number of cofactors. It forms dimeric complexes. Requires Binds multiple chlorophylls. PSII binds additional chlorophylls, carotenoids and specific lipids. as cofactor.

It is found in the plastid. It localises to the chloroplast thylakoid membrane. Functionally, one of the components of the core complex of photosystem II (PSII). It binds chlorophyll and helps catalyze the primary light-induced photochemical processes of PSII. PSII is a light-driven water:plastoquinone oxidoreductase, using light energy to abstract electrons from H(2)O, generating O(2) and a proton gradient subsequently used for ATP formation. This chain is Photosystem II CP47 reaction center protein, found in Hordeum vulgare (Barley).